A 156-amino-acid chain; its full sequence is tRNA (cytidine(34)-2'-O)-methyltransferase (156 aa).

The S-adenosyl-L-methionine site is built by Gly102, Leu124, and Ser132.

Belongs to the class IV-like SAM-binding methyltransferase superfamily. RNA methyltransferase TrmH family. TrmL subfamily. Homodimer.

It is found in the cytoplasm. It catalyses the reaction cytidine(34) in tRNA + S-adenosyl-L-methionine = 2'-O-methylcytidine(34) in tRNA + S-adenosyl-L-homocysteine + H(+). The catalysed reaction is 5-carboxymethylaminomethyluridine(34) in tRNA(Leu) + S-adenosyl-L-methionine = 5-carboxymethylaminomethyl-2'-O-methyluridine(34) in tRNA(Leu) + S-adenosyl-L-homocysteine + H(+). Methylates the ribose at the nucleotide 34 wobble position in the two leucyl isoacceptors tRNA(Leu)(CmAA) and tRNA(Leu)(cmnm5UmAA). Catalyzes the methyl transfer from S-adenosyl-L-methionine to the 2'-OH of the wobble nucleotide. In Burkholderia ambifaria (strain ATCC BAA-244 / DSM 16087 / CCUG 44356 / LMG 19182 / AMMD) (Burkholderia cepacia (strain AMMD)), this protein is tRNA (cytidine(34)-2'-O)-methyltransferase.